The following is a 279-amino-acid chain: MKKLYLIGKSLKHSISPLIHNKILSNFGIDAVYSNVELPDFEKLKEFVEMVKKDGDVVGFNITIPYKEDILEFCDEVSEDVRIIQAANTVKKEGEKLVAYNTDWLGFKRSLEEVGISVKDKRILILGAGGAAKACIYGLYRMGVKEVFVANRTYEKAESLKEVFQDILKILPVEWLRRYEFKYDIIINTTSVGMFPNIESSPFDFENYVAGIPVFVYDMIYNPPKTTFLEEAEKKGSKTENGLKMLVYQAVEAEKIWFDIVNLSQSFLLEILKECEKKI.

Residues 14-16 (SIS) and Thr63 each bind shikimate. Residue Lys67 is the Proton acceptor of the active site. Position 79 (Glu79) interacts with NADP(+). 2 residues coordinate shikimate: Asn88 and Asp103. Residues 127-131 (GAGGA), 151-156 (NRTYEK), and Met219 each bind NADP(+). Tyr221 contacts shikimate. Residue Gly242 participates in NADP(+) binding.

Belongs to the shikimate dehydrogenase family. In terms of assembly, homodimer.

The enzyme catalyses shikimate + NADP(+) = 3-dehydroshikimate + NADPH + H(+). It participates in metabolic intermediate biosynthesis; chorismate biosynthesis; chorismate from D-erythrose 4-phosphate and phosphoenolpyruvate: step 4/7. In terms of biological role, involved in the biosynthesis of the chorismate, which leads to the biosynthesis of aromatic amino acids. Catalyzes the reversible NADPH linked reduction of 3-dehydroshikimate (DHSA) to yield shikimate (SA). This Caldicellulosiruptor saccharolyticus (strain ATCC 43494 / DSM 8903 / Tp8T 6331) protein is Shikimate dehydrogenase (NADP(+)).